The primary structure comprises 546 residues: Chaperonin GroEL (546 aa).

Residues 30-33 (TLGP), Lys-51, 87-91 (DGTTT), Gly-415, 479-481 (NAA), and Asp-495 contribute to the ATP site.

This sequence belongs to the chaperonin (HSP60) family. Forms a cylinder of 14 subunits composed of two heptameric rings stacked back-to-back. Interacts with the co-chaperonin GroES.

Its subcellular location is the cytoplasm. The enzyme catalyses ATP + H2O + a folded polypeptide = ADP + phosphate + an unfolded polypeptide.. In terms of biological role, together with its co-chaperonin GroES, plays an essential role in assisting protein folding. The GroEL-GroES system forms a nano-cage that allows encapsulation of the non-native substrate proteins and provides a physical environment optimized to promote and accelerate protein folding. The protein is Chaperonin GroEL of Pseudomonas putida (strain ATCC 700007 / DSM 6899 / JCM 31910 / BCRC 17059 / LMG 24140 / F1).